Consider the following 196-residue polypeptide: Imidazoleglycerol-phosphate dehydratase (196 aa).

This sequence belongs to the imidazoleglycerol-phosphate dehydratase family.

Its subcellular location is the cytoplasm. The enzyme catalyses D-erythro-1-(imidazol-4-yl)glycerol 3-phosphate = 3-(imidazol-4-yl)-2-oxopropyl phosphate + H2O. It participates in amino-acid biosynthesis; L-histidine biosynthesis; L-histidine from 5-phospho-alpha-D-ribose 1-diphosphate: step 6/9. The protein is Imidazoleglycerol-phosphate dehydratase of Granulibacter bethesdensis (strain ATCC BAA-1260 / CGDNIH1).